The sequence spans 842 residues: Protein translocase subunit SecA 1 (842 aa).

ATP is bound by residues Gln85, 103–107, and Asp493; that span reads GEGKT. Residues Cys824, Cys826, Cys835, and His836 each coordinate Zn(2+).

This sequence belongs to the SecA family. Monomer and homodimer. Part of the essential Sec protein translocation apparatus which comprises SecA, SecYEG and auxiliary proteins SecDF. Other proteins may also be involved. The cofactor is Zn(2+).

It localises to the cell membrane. The protein localises to the cytoplasm. The enzyme catalyses ATP + H2O + cellular proteinSide 1 = ADP + phosphate + cellular proteinSide 2.. Functionally, part of the Sec protein translocase complex. Interacts with the SecYEG preprotein conducting channel. Has a central role in coupling the hydrolysis of ATP to the transfer of proteins into and across the cell membrane, serving as an ATP-driven molecular motor driving the stepwise translocation of polypeptide chains across the membrane. This is Protein translocase subunit SecA 1 from Streptococcus agalactiae serotype Ia (strain ATCC 27591 / A909 / CDC SS700).